The primary structure comprises 450 residues: Perilipin-2 (450 aa).

An N-acetylalanine modification is found at A2. S215 is modified (phosphoserine). Phosphotyrosine is present on Y232. The disordered stretch occupies residues 411 to 450; that stretch reads ESESAQAPGTTRRPGRWSRKHPKPVPVSNAEGSQPDDSSS. The span at 423–433 shows a compositional bias: basic residues; the sequence is RPGRWSRKHPK. Residues 440–450 are compositionally biased toward polar residues; that stretch reads AEGSQPDDSSS.

Belongs to the perilipin family. Interacts with IRGC. Acylated; primarily with C14, C16 and C18 fatty acids. Post-translationally, phosphorylation at Tyr-232 by isoform 1 of CHKA (CHKalpha2) promotes dissociation from lipid droplets: dissociation is followed by recruitment of autophagosome machinery to lipid droplets and subsequent lipid droplet lipolysis. In terms of processing, polyubiquitination of Nt-acetylatable A-PLIN2 by MARCHF6 lead to degradation by 26S proteasomes. In terms of tissue distribution, milk lipid globules.

Its subcellular location is the membrane. It is found in the lipid droplet. Structural component of lipid droplets, which is required for the formation and maintenance of lipid storage droplets. This Bos taurus (Bovine) protein is Perilipin-2 (PLIN2).